The sequence spans 143 residues: Nucleoside diphosphate kinase (143 aa).

6 residues coordinate ATP: Lys11, Phe59, Arg87, Thr93, Arg104, and Asn114. His117 functions as the Pros-phosphohistidine intermediate in the catalytic mechanism.

This sequence belongs to the NDK family. Homotetramer. It depends on Mg(2+) as a cofactor.

Its subcellular location is the cytoplasm. The enzyme catalyses a 2'-deoxyribonucleoside 5'-diphosphate + ATP = a 2'-deoxyribonucleoside 5'-triphosphate + ADP. It catalyses the reaction a ribonucleoside 5'-diphosphate + ATP = a ribonucleoside 5'-triphosphate + ADP. Functionally, major role in the synthesis of nucleoside triphosphates other than ATP. The ATP gamma phosphate is transferred to the NDP beta phosphate via a ping-pong mechanism, using a phosphorylated active-site intermediate. The chain is Nucleoside diphosphate kinase from Azotobacter vinelandii (strain DJ / ATCC BAA-1303).